The chain runs to 165 residues: Xanthine-guanine phosphoribosyltransferase (165 aa).

5-phospho-alpha-D-ribose 1-diphosphate is bound by residues 41 to 42 (RG) and 98 to 106 (DDLTDTGKT). Aspartate 99 serves as a coordination point for Mg(2+). Positions 102 and 145 each coordinate guanine. 2 residues coordinate xanthine: aspartate 102 and isoleucine 145. GMP-binding positions include 102-106 (DTGKT) and 144-145 (WI).

It belongs to the purine/pyrimidine phosphoribosyltransferase family. XGPT subfamily. As to quaternary structure, homotetramer. The cofactor is Mg(2+).

The protein resides in the cell inner membrane. It catalyses the reaction GMP + diphosphate = guanine + 5-phospho-alpha-D-ribose 1-diphosphate. The catalysed reaction is XMP + diphosphate = xanthine + 5-phospho-alpha-D-ribose 1-diphosphate. It carries out the reaction IMP + diphosphate = hypoxanthine + 5-phospho-alpha-D-ribose 1-diphosphate. It functions in the pathway purine metabolism; GMP biosynthesis via salvage pathway; GMP from guanine: step 1/1. The protein operates within purine metabolism; XMP biosynthesis via salvage pathway; XMP from xanthine: step 1/1. Functionally, purine salvage pathway enzyme that catalyzes the transfer of the ribosyl-5-phosphate group from 5-phospho-alpha-D-ribose 1-diphosphate (PRPP) to the N9 position of the 6-oxopurines guanine and xanthine to form the corresponding ribonucleotides GMP (guanosine 5'-monophosphate) and XMP (xanthosine 5'-monophosphate), with the release of PPi. To a lesser extent, also acts on hypoxanthine. This chain is Xanthine-guanine phosphoribosyltransferase, found in Sinorhizobium medicae (strain WSM419) (Ensifer medicae).